The sequence spans 472 residues: Sad1-interacting factor 3 (472 aa).

Disordered stretches follow at residues 1 to 47 (MSTK…PRFG) and 197 to 223 (SSGP…DKPD). Residues 1–443 (MSTKDKLNLP…KSSADRKMNS (443 aa)) are Lumenal-facing. Polar residues predominate over residues 30 to 40 (NSESTRITPQH). S42 bears the Phosphoserine mark. A helical transmembrane segment spans residues 444–464 (ITWIIIILISLFVIIFTLEVI). Topologically, residues 465–472 (LRLRWAHR) are cytoplasmic.

It belongs to the RMD1/sif2 family. Interacts with sad1.

It localises to the nucleus membrane. This is Sad1-interacting factor 3 (sif3) from Schizosaccharomyces pombe (strain 972 / ATCC 24843) (Fission yeast).